Reading from the N-terminus, the 164-residue chain is IQ domain-containing protein F2 (164 aa).

2 IQ domains span residues 43-72 and 99-128; these read RTKA…RAWI and RERA…AIYI.

The chain is IQ domain-containing protein F2 (IQCF2) from Homo sapiens (Human).